The primary structure comprises 515 residues: MEIRADEISRIIREQIKDYGKKVTVAETGTVLSVGDGIARIYGLEGALAGELVEFANGVQGLVLNLEEDNVGVAIMGDFQAIREGDTVKRTQQIASVPVGKELLGRVVDPLGKPLDGKGPIAATETRRLEVKAPGIVSRKSVHEPLQTGIKALDALVPVGRGQRELIIGDRQTGKTAVAIDTIINQKGLNVYCIYVAIGQKQSTVAQVVEKLNRYGAMEYTTVVASNASDPAPMQFFAPYAGVAMGEYFRDNKMHALIVYDDLSKQAVAYRQLSLLLRRPPGREAYPGDVFYVHSRLLERAAKLSDEEGAGSLTALPIIETQAGDVSAYIPTNVISITDGQIFLETDLFFAGVRPAINVGLSVSRVGSAAQIKAMKQVAGTMKLELAQYRELAAFAQFGSDLDKATQETLARGARMVELLKQGQYEPMPVEKQVMQIYAATNRDDPKKRGWIRDIPTADVVRWMREFLEFADGKHPNVAKDLASKRELTADIKTALSKAITEFNEVFQPTPGAKV.

169 to 176 (GDRQTGKT) is an ATP binding site.

The protein belongs to the ATPase alpha/beta chains family. F-type ATPases have 2 components, CF(1) - the catalytic core - and CF(0) - the membrane proton channel. CF(1) has five subunits: alpha(3), beta(3), gamma(1), delta(1), epsilon(1). CF(0) has three main subunits: a(1), b(2) and c(9-12). The alpha and beta chains form an alternating ring which encloses part of the gamma chain. CF(1) is attached to CF(0) by a central stalk formed by the gamma and epsilon chains, while a peripheral stalk is formed by the delta and b chains.

It is found in the cell inner membrane. The catalysed reaction is ATP + H2O + 4 H(+)(in) = ADP + phosphate + 5 H(+)(out). Functionally, produces ATP from ADP in the presence of a proton gradient across the membrane. The alpha chain is a regulatory subunit. The chain is ATP synthase subunit alpha from Myxococcus xanthus.